Reading from the N-terminus, the 153-residue chain is ATP synthase subunit b' (153 aa).

Residues 20–40 traverse the membrane as a helical segment; it reads TLPLMAVQVVLLTFILNALFF.

Belongs to the ATPase B chain family. In terms of assembly, F-type ATPases have 2 components, F(1) - the catalytic core - and F(0) - the membrane proton channel. F(1) has five subunits: alpha(3), beta(3), gamma(1), delta(1), epsilon(1). F(0) has four main subunits: a(1), b(1), b'(1) and c(10-14). The alpha and beta chains form an alternating ring which encloses part of the gamma chain. F(1) is attached to F(0) by a central stalk formed by the gamma and epsilon chains, while a peripheral stalk is formed by the delta, b and b' chains.

The protein localises to the cellular thylakoid membrane. F(1)F(0) ATP synthase produces ATP from ADP in the presence of a proton or sodium gradient. F-type ATPases consist of two structural domains, F(1) containing the extramembraneous catalytic core and F(0) containing the membrane proton channel, linked together by a central stalk and a peripheral stalk. During catalysis, ATP synthesis in the catalytic domain of F(1) is coupled via a rotary mechanism of the central stalk subunits to proton translocation. In terms of biological role, component of the F(0) channel, it forms part of the peripheral stalk, linking F(1) to F(0). The b'-subunit is a diverged and duplicated form of b found in plants and photosynthetic bacteria. This Prochlorococcus marinus (strain MIT 9211) protein is ATP synthase subunit b'.